The following is a 432-amino-acid chain: UPF0597 protein APJL_1638 (432 aa).

Belongs to the UPF0597 family.

In Actinobacillus pleuropneumoniae serotype 3 (strain JL03), this protein is UPF0597 protein APJL_1638.